The following is a 122-amino-acid chain: Large ribosomal subunit protein uL14 (122 aa).

It belongs to the universal ribosomal protein uL14 family. In terms of assembly, part of the 50S ribosomal subunit. Forms a cluster with proteins L3 and L19. In the 70S ribosome, L14 and L19 interact and together make contacts with the 16S rRNA in bridges B5 and B8.

In terms of biological role, binds to 23S rRNA. Forms part of two intersubunit bridges in the 70S ribosome. In Phytoplasma mali (strain AT), this protein is Large ribosomal subunit protein uL14.